We begin with the raw amino-acid sequence, 349 residues long: Thiamine thiazole synthase, chloroplastic (349 aa).

Residues 1–45 constitute a chloroplast transit peptide; it reads MAAIASTLSLSSTKPQRLFDSSFHGSAISAAPISIGLKPRSFSVR. Substrate-binding positions include Ala94, 114-115, Gly122, and Ala187; that span reads EQ. The residue at position 216 (Cys216) is a 2,3-didehydroalanine (Cys). Substrate contacts are provided by residues Asp218, His233, Met285, and 295 to 297; that span reads RMG.

This sequence belongs to the THI4 family. Homooctamer. Interacts with RBCX1 and RBCX1. Interacts with CPK33. Fe cation serves as cofactor. In terms of processing, during the catalytic reaction, a sulfide is transferred from Cys-216 to a reaction intermediate, generating a dehydroalanine residue. Not phosphorylated in vitro by CPK33. As to expression, expressed at high levels in chloroplast-containing parenchymatic cells of leaves, inflorescence shoots and flowers, and at lower levels in the vascular system. In young plants, detected in roots and shoots including cotyledons, leaves and hypocotyls. Also observed in apical meristematic regions, siliques and embryos. Low expression in roots, limited to the vascular tissue. Broadly expressed in roots, cotyledons, leaves, hypocotyls, inflorescences, siliques, and strongly in guard cells.

It localises to the plastid. The protein localises to the chloroplast. The protein resides in the mitochondrion. It is found in the cell membrane. The catalysed reaction is [ADP-thiazole synthase]-L-cysteine + glycine + NAD(+) = [ADP-thiazole synthase]-dehydroalanine + ADP-5-ethyl-4-methylthiazole-2-carboxylate + nicotinamide + 3 H2O + 2 H(+). Involved in biosynthesis of the thiamine precursor thiazole. Catalyzes the conversion of NAD and glycine to adenosine diphosphate 5-(2-hydroxyethyl)-4-methylthiazole-2-carboxylic acid (ADT), an adenylated thiazole intermediate. The reaction includes an iron-dependent sulfide transfer from a conserved cysteine residue of the protein to a thiazole intermediate. The enzyme can only undergo a single turnover, which suggests it is a suicide enzyme. May have additional roles in adaptation to various stress conditions and in DNA damage tolerance. Acts as a positive regulator for the abscisic acid-induced activation of slow type anion channels during stomatal closure by repressing CPK33 kinase activity. In Arabidopsis thaliana (Mouse-ear cress), this protein is Thiamine thiazole synthase, chloroplastic.